The primary structure comprises 436 residues: Xylose isomerase (436 aa).

Active-site residues include H100 and D103. Residues E231, E267, H270, D295, D306, D308, and D338 each contribute to the Mg(2+) site.

It belongs to the xylose isomerase family. As to quaternary structure, homotetramer. It depends on Mg(2+) as a cofactor.

It is found in the cytoplasm. It catalyses the reaction alpha-D-xylose = alpha-D-xylulofuranose. This is Xylose isomerase from Agrobacterium fabrum (strain C58 / ATCC 33970) (Agrobacterium tumefaciens (strain C58)).